A 173-amino-acid chain; its full sequence is Alkyl hydroperoxide reductase AhpD (173 aa).

The Proton donor role is filled by Cys131. A disulfide bond links Cys131 and Cys134. The active-site Cysteine sulfenic acid (-SOH) intermediate is the Cys134.

Belongs to the AhpD family.

The catalysed reaction is N(6)-[(R)-dihydrolipoyl]-L-lysyl-[lipoyl-carrier protein] + a hydroperoxide = N(6)-[(R)-lipoyl]-L-lysyl-[lipoyl-carrier protein] + an alcohol + H2O. In terms of biological role, antioxidant protein with alkyl hydroperoxidase activity. Required for the reduction of the AhpC active site cysteine residues and for the regeneration of the AhpC enzyme activity. The sequence is that of Alkyl hydroperoxide reductase AhpD from Maricaulis maris (strain MCS10) (Caulobacter maris).